Here is an 88-residue protein sequence, read N- to C-terminus: Small ribosomal subunit protein uS15c (88 aa).

This sequence belongs to the universal ribosomal protein uS15 family. In terms of assembly, part of the 30S ribosomal subunit.

The protein localises to the plastid. Its subcellular location is the chloroplast. In Pinus koraiensis (Korean pine), this protein is Small ribosomal subunit protein uS15c (rps15).